A 386-amino-acid chain; its full sequence is Alanine racemase 1 (386 aa).

The active-site Proton acceptor; specific for D-alanine is Lys38. Lys38 bears the N6-(pyridoxal phosphate)lysine mark. Arg136 lines the substrate pocket. Residue Tyr267 is the Proton acceptor; specific for L-alanine of the active site. Residue Met315 participates in substrate binding.

Belongs to the alanine racemase family. The cofactor is pyridoxal 5'-phosphate.

It carries out the reaction L-alanine = D-alanine. The protein operates within amino-acid biosynthesis; D-alanine biosynthesis; D-alanine from L-alanine: step 1/1. In terms of biological role, catalyzes the interconversion of L-alanine and D-alanine. May also act on other amino acids. The chain is Alanine racemase 1 (alr1) from Clostridium acetobutylicum (strain ATCC 824 / DSM 792 / JCM 1419 / IAM 19013 / LMG 5710 / NBRC 13948 / NRRL B-527 / VKM B-1787 / 2291 / W).